Consider the following 353-residue polypeptide: MRFVDEVVINVKAGKGGNGIVSFRREKYIEFGGPDGGDGGDGGSVYLRASDGLNTLSDFRYTRHFEAENGAAGEGRNKRGRSGEDLYIDVPLGTQVFVAETDELMGDLTAVGQTLLVAKGGFHGIGNTRYKSSVNRAPRQCKAGGLGEERVIRLELKLLADVGLLGMPNAGKSTLIAQVSSAKPKIADYPFTTLHPNLGVVRVGALQSFVMADIPGLIAGAADGMGLGHQFLRHLARNRILLHLLDCSPMSDSQNPITDFEQVSAELIKYDADFAQIPRWLVLNKMDTLPPELWQQKQEEIVRALNWQGKVFSISAAAGIGTAELCTAIMQELTAMKANQTAENDEPNAPELI.

One can recognise an Obg domain in the interval 1–159; sequence MRFVDEVVIN…RVIRLELKLL (159 aa). An OBG-type G domain is found at 160 to 334; it reads ADVGLLGMPN…LCTAIMQELT (175 aa). Residues 166 to 173, 191 to 195, 213 to 216, 284 to 287, and 315 to 317 contribute to the GTP site; these read GMPNAGKS, FTTLH, DIPG, NKMD, and SAA. Residues Ser-173 and Thr-193 each contribute to the Mg(2+) site.

The protein belongs to the TRAFAC class OBG-HflX-like GTPase superfamily. OBG GTPase family. As to quaternary structure, monomer. The cofactor is Mg(2+).

Its subcellular location is the cytoplasm. In terms of biological role, an essential GTPase which binds GTP, GDP and possibly (p)ppGpp with moderate affinity, with high nucleotide exchange rates and a fairly low GTP hydrolysis rate. Plays a role in control of the cell cycle, stress response, ribosome biogenesis and in those bacteria that undergo differentiation, in morphogenesis control. This chain is GTPase Obg, found in Dichelobacter nodosus (strain VCS1703A).